The primary structure comprises 336 residues: Glyceraldehyde-3-phosphate dehydrogenase (336 aa).

Residues 12-13, D34, R78, and T121 each bind NAD(+); that span reads RI. Residues 151-153, T182, R199, 212-213, and R235 contribute to the D-glyceraldehyde 3-phosphate site; these read SCT and TG. C152 functions as the Nucleophile in the catalytic mechanism. N316 serves as a coordination point for NAD(+).

It belongs to the glyceraldehyde-3-phosphate dehydrogenase family. In terms of assembly, homotetramer.

Its subcellular location is the cytoplasm. The catalysed reaction is D-glyceraldehyde 3-phosphate + phosphate + NAD(+) = (2R)-3-phospho-glyceroyl phosphate + NADH + H(+). The protein operates within carbohydrate degradation; glycolysis; pyruvate from D-glyceraldehyde 3-phosphate: step 1/5. Functionally, catalyzes the oxidative phosphorylation of glyceraldehyde 3-phosphate (G3P) to 1,3-bisphosphoglycerate (BPG) using the cofactor NAD. The first reaction step involves the formation of a hemiacetal intermediate between G3P and a cysteine residue, and this hemiacetal intermediate is then oxidized to a thioester, with concomitant reduction of NAD to NADH. The reduced NADH is then exchanged with the second NAD, and the thioester is attacked by a nucleophilic inorganic phosphate to produce BPG. The protein is Glyceraldehyde-3-phosphate dehydrogenase (gap) of Streptococcus pyogenes serotype M3 (strain ATCC BAA-595 / MGAS315).